Reading from the N-terminus, the 368-residue chain is D-alanine--D-alanine ligase (368 aa).

An ATP-grasp domain is found at 151–358 (KKLLAAEGLP…YGTLVSTLVD (208 aa)). 179–234 (RSRLHLPVFVKPARGGSSIGITRVAEWAALDDAIAHARRHDPKVIVESGIAGREVE) is an ATP binding site. 3 residues coordinate Mg(2+): aspartate 313, glutamate 325, and asparagine 327.

Belongs to the D-alanine--D-alanine ligase family. Mg(2+) is required as a cofactor. Requires Mn(2+) as cofactor.

The protein resides in the cytoplasm. The catalysed reaction is 2 D-alanine + ATP = D-alanyl-D-alanine + ADP + phosphate + H(+). It participates in cell wall biogenesis; peptidoglycan biosynthesis. Its function is as follows. Cell wall formation. The protein is D-alanine--D-alanine ligase of Rhodococcus opacus (strain B4).